The primary structure comprises 302 residues: tRNA dimethylallyltransferase (302 aa).

9–16 is a binding site for ATP; that stretch reads GPTGTGKS. 11 to 16 contacts substrate; that stretch reads TGTGKS.

Belongs to the IPP transferase family. In terms of assembly, monomer. It depends on Mg(2+) as a cofactor.

It carries out the reaction adenosine(37) in tRNA + dimethylallyl diphosphate = N(6)-dimethylallyladenosine(37) in tRNA + diphosphate. Catalyzes the transfer of a dimethylallyl group onto the adenine at position 37 in tRNAs that read codons beginning with uridine, leading to the formation of N6-(dimethylallyl)adenosine (i(6)A). The polypeptide is tRNA dimethylallyltransferase (Mycolicibacterium smegmatis (strain ATCC 700084 / mc(2)155) (Mycobacterium smegmatis)).